The primary structure comprises 257 residues: tRNA (guanine-N(1)-)-methyltransferase (257 aa).

S-adenosyl-L-methionine contacts are provided by residues Gly-113 and 133 to 138 (IGDYVL).

The protein belongs to the RNA methyltransferase TrmD family. As to quaternary structure, homodimer.

It localises to the cytoplasm. The catalysed reaction is guanosine(37) in tRNA + S-adenosyl-L-methionine = N(1)-methylguanosine(37) in tRNA + S-adenosyl-L-homocysteine + H(+). In terms of biological role, specifically methylates guanosine-37 in various tRNAs. This is tRNA (guanine-N(1)-)-methyltransferase from Cronobacter sakazakii (strain ATCC BAA-894) (Enterobacter sakazakii).